A 721-amino-acid chain; its full sequence is Ribonuclease R (721 aa).

The 339-residue stretch at 249–587 folds into the RNB domain; it reads RRSIIDREII…VHRLLWMFIF (339 aa). An S1 motif domain is found at 639–719; the sequence is GKEFIGVVTT…LTRKIDFELV (81 aa).

Belongs to the RNR ribonuclease family. RNase R subfamily.

It is found in the cytoplasm. It catalyses the reaction Exonucleolytic cleavage in the 3'- to 5'-direction to yield nucleoside 5'-phosphates.. Functionally, 3'-5' exoribonuclease that releases 5'-nucleoside monophosphates and is involved in maturation of structured RNAs. The chain is Ribonuclease R from Ureaplasma parvum serovar 3 (strain ATCC 700970).